Reading from the N-terminus, the 308-residue chain is MNMHDLTTVESFSEEDVLHKIRLAEEFKNGKTIELTRPVYAMNLFFENSTRTHTSFEMAESRLGMRLLEFEAKTSSVTKGESLLDTVKTIDAIQTDIAVIRHPQNDYYKQLLEADLNISIVNGGDGSGQHPSQSLLDMMTIYQEFNHFDGLKIAIAGDIAHSRVARSNAMLLNKLGAEVYFAGPEAWMAEDLKAYGTFLPIDELVEKVDVMMLLRIQNERISQDTAIKFEPHEYLQEYGLTFERADRMQPTAIIMHPAPVNRGTEIESSLVDGEKSRIFKQMTNGMYMRMAILTDVLEAKGLIKGGLH.

Carbamoyl phosphate-binding residues include arginine 51 and threonine 52. Position 79 (lysine 79) interacts with L-aspartate. Carbamoyl phosphate contacts are provided by arginine 101, histidine 130, and glutamine 133. Positions 163 and 215 each coordinate L-aspartate. 2 residues coordinate carbamoyl phosphate: alanine 258 and proline 259.

Belongs to the aspartate/ornithine carbamoyltransferase superfamily. ATCase family. As to quaternary structure, heterododecamer (2C3:3R2) of six catalytic PyrB chains organized as two trimers (C3), and six regulatory PyrI chains organized as three dimers (R2).

The catalysed reaction is carbamoyl phosphate + L-aspartate = N-carbamoyl-L-aspartate + phosphate + H(+). Its pathway is pyrimidine metabolism; UMP biosynthesis via de novo pathway; (S)-dihydroorotate from bicarbonate: step 2/3. In terms of biological role, catalyzes the condensation of carbamoyl phosphate and aspartate to form carbamoyl aspartate and inorganic phosphate, the committed step in the de novo pyrimidine nucleotide biosynthesis pathway. This chain is Aspartate carbamoyltransferase catalytic subunit, found in Pediococcus pentosaceus (strain ATCC 25745 / CCUG 21536 / LMG 10740 / 183-1w).